The chain runs to 388 residues: Lipid-A-disaccharide synthase (388 aa).

The protein belongs to the LpxB family.

The enzyme catalyses a lipid X + a UDP-2-N,3-O-bis[(3R)-3-hydroxyacyl]-alpha-D-glucosamine = a lipid A disaccharide + UDP + H(+). Its pathway is bacterial outer membrane biogenesis; LPS lipid A biosynthesis. Functionally, condensation of UDP-2,3-diacylglucosamine and 2,3-diacylglucosamine-1-phosphate to form lipid A disaccharide, a precursor of lipid A, a phosphorylated glycolipid that anchors the lipopolysaccharide to the outer membrane of the cell. In Burkholderia pseudomallei (strain 1710b), this protein is Lipid-A-disaccharide synthase.